The sequence spans 388 residues: Methylthioribose-1-phosphate isomerase (388 aa).

D252 functions as the Proton donor in the catalytic mechanism.

This sequence belongs to the eIF-2B alpha/beta/delta subunits family. MtnA subfamily.

The protein resides in the cytoplasm. It localises to the nucleus. It catalyses the reaction 5-(methylsulfanyl)-alpha-D-ribose 1-phosphate = 5-(methylsulfanyl)-D-ribulose 1-phosphate. It participates in amino-acid biosynthesis; L-methionine biosynthesis via salvage pathway; L-methionine from S-methyl-5-thio-alpha-D-ribose 1-phosphate: step 1/6. Its function is as follows. Catalyzes the interconversion of methylthioribose-1-phosphate (MTR-1-P) into methylthioribulose-1-phosphate (MTRu-1-P). In Verticillium alfalfae (strain VaMs.102 / ATCC MYA-4576 / FGSC 10136) (Verticillium wilt of alfalfa), this protein is Methylthioribose-1-phosphate isomerase.